A 202-amino-acid polypeptide reads, in one-letter code: 3-isopropylmalate dehydratase small subunit (202 aa).

It belongs to the LeuD family. LeuD type 1 subfamily. As to quaternary structure, heterodimer of LeuC and LeuD.

The enzyme catalyses (2R,3S)-3-isopropylmalate = (2S)-2-isopropylmalate. It functions in the pathway amino-acid biosynthesis; L-leucine biosynthesis; L-leucine from 3-methyl-2-oxobutanoate: step 2/4. In terms of biological role, catalyzes the isomerization between 2-isopropylmalate and 3-isopropylmalate, via the formation of 2-isopropylmaleate. This is 3-isopropylmalate dehydratase small subunit from Nocardioides sp. (strain ATCC BAA-499 / JS614).